A 390-amino-acid polypeptide reads, in one-letter code: GTPase Obg (390 aa).

Residues 1 to 159 form the Obg domain; it reads MKFVDEASIL…RELLLELMLL (159 aa). The segment at 127–147 is disordered; the sequence is NTRFKSSVNRTPRQKTNGTPG. A compositionally biased stretch (polar residues) spans 129–145; the sequence is RFKSSVNRTPRQKTNGT. One can recognise an OBG-type G domain in the interval 160-333; that stretch reads ADVGMLGMPN…LCWDVMTFII (174 aa). GTP is bound by residues 166–173, 191–195, 213–216, 283–286, and 314–316; these read GMPNAGKS, FTTLV, DIPG, NKID, and SAA. The Mg(2+) site is built by Ser173 and Thr193.

This sequence belongs to the TRAFAC class OBG-HflX-like GTPase superfamily. OBG GTPase family. As to quaternary structure, monomer. Mg(2+) is required as a cofactor.

It localises to the cytoplasm. In terms of biological role, an essential GTPase which binds GTP, GDP and possibly (p)ppGpp with moderate affinity, with high nucleotide exchange rates and a fairly low GTP hydrolysis rate. Plays a role in control of the cell cycle, stress response, ribosome biogenesis and in those bacteria that undergo differentiation, in morphogenesis control. The sequence is that of GTPase Obg from Escherichia coli O157:H7.